The primary structure comprises 249 residues: Tryptophan synthase alpha chain (249 aa).

Residues E43 and D54 each act as proton acceptor in the active site.

The protein belongs to the TrpA family. In terms of assembly, tetramer of two alpha and two beta chains.

The enzyme catalyses (1S,2R)-1-C-(indol-3-yl)glycerol 3-phosphate + L-serine = D-glyceraldehyde 3-phosphate + L-tryptophan + H2O. It functions in the pathway amino-acid biosynthesis; L-tryptophan biosynthesis; L-tryptophan from chorismate: step 5/5. Functionally, the alpha subunit is responsible for the aldol cleavage of indoleglycerol phosphate to indole and glyceraldehyde 3-phosphate. The protein is Tryptophan synthase alpha chain of Campylobacter jejuni subsp. jejuni serotype O:23/36 (strain 81-176).